A 315-amino-acid polypeptide reads, in one-letter code: MFTFILMFYIGYGIDFNTWVANNNKHFTAVESLRRRAIFNMNARIVAENNRKETFKLSVDGPFAAMTNEEYNSLLKLKRSGEEKGEVRYLNIQAPKAVDWRKKGKVTPIRDQGNCGSCYTFGSIAALEGRLLIEKGGDSETLDLSEEHMVQCTREDGNNGCNGGLGSNVYNYIMENGIAKESDYPYTGSDSTCRSDVKAFAKIKSYNRVARNNEVELKAAISQGLVDVSIDASSVQFQLYKSGAYTDKQCKNNYFALNHEVCAVGYGVVDGKECWIVRNSWGTGWGEKGYINMVIEGNTCGVATDPLYPTGVEYL.

Residues Met-1 to Gly-13 form the signal peptide. The propeptide at Ile-14–Gln-93 is activation peptide. 2 disulfides stabilise this stretch: Cys-115–Cys-161 and Cys-152–Cys-193. Cys-118 is a catalytic residue. Catalysis depends on residues His-259 and Asn-279.

It belongs to the peptidase C1 family.

It localises to the lysosome. With respect to regulation, inhibited by cysteine protease inhibitors ICP1 and ICP2. Functionally, cysteine protease which degrades matrix proteins such as collagen, laminin and fibronectin and thus is involved in the destruction of human tissue. Can abolish adhesion. May play an important role in pathogenicity. This chain is Cysteine proteinase 1, found in Entamoeba histolytica (strain ATCC 30459 / HM-1:IMSS / ABRM).